The primary structure comprises 293 residues: DDRGK domain-containing protein 1 (293 aa).

The Lumenal portion of the chain corresponds to 1–6 (MWGPLI). The chain crosses the membrane as a helical span at residues 7–27 (YALLGLAIVAAAFLFVRRSQA). At 28 to 293 (KEVVPVADDD…PADVDETTTA (266 aa)) the chain is on the cytoplasmic side. Disordered stretches follow at residues 30–151 (VVPV…RQKE) and 273–293 (TDVE…TTTA). Composition is skewed to basic and acidic residues over residues 90 to 126 (KLQE…KERE) and 133 to 151 (ERQR…RQKE).

Belongs to the DDRGK1 family.

The protein resides in the endoplasmic reticulum membrane. In terms of biological role, substrate adapter for ufmylation, the covalent attachment of the ubiquitin-like modifier UFM1 to substrate proteins. This chain is DDRGK domain-containing protein 1, found in Monosiga brevicollis (Choanoflagellate).